Consider the following 376-residue polypeptide: Chaperone protein DnaJ (376 aa).

A J domain is found at 5-70 (DYYETLGVQK…EKRAAYDQYG (66 aa)). Residues 133–211 (GTTKDIKINT…CHGDGRVHKK (79 aa)) form a CR-type zinc finger. Zn(2+)-binding residues include Cys146, Cys149, Cys163, Cys166, Cys185, Cys188, Cys199, and Cys202. 4 CXXCXGXG motif repeats span residues 146-153 (CDHCDGSG), 163-170 (CPTCHGHG), 185-192 (CPTCQGSG), and 199-206 (CKHCHGDG).

This sequence belongs to the DnaJ family. In terms of assembly, homodimer. Zn(2+) is required as a cofactor.

The protein resides in the cytoplasm. Functionally, participates actively in the response to hyperosmotic and heat shock by preventing the aggregation of stress-denatured proteins and by disaggregating proteins, also in an autonomous, DnaK-independent fashion. Unfolded proteins bind initially to DnaJ; upon interaction with the DnaJ-bound protein, DnaK hydrolyzes its bound ATP, resulting in the formation of a stable complex. GrpE releases ADP from DnaK; ATP binding to DnaK triggers the release of the substrate protein, thus completing the reaction cycle. Several rounds of ATP-dependent interactions between DnaJ, DnaK and GrpE are required for fully efficient folding. Also involved, together with DnaK and GrpE, in the DNA replication of plasmids through activation of initiation proteins. In Mannheimia succiniciproducens (strain KCTC 0769BP / MBEL55E), this protein is Chaperone protein DnaJ.